The chain runs to 362 residues: H-2 class I histocompatibility antigen, L-D alpha chain (362 aa).

Positions methionine 1–alanine 24 are cleaved as a signal peptide. An alpha-1 region spans residues glycine 25–glycine 114. Residues glycine 25–valine 309 lie on the Extracellular side of the membrane. Residue asparagine 110 is glycosylated (N-linked (GlcNAc...) asparagine). The alpha-2 stretch occupies residues glycine 115–threonine 206. Cysteines 125 and 188 form a disulfide. N-linked (GlcNAc...) asparagine glycosylation is found at asparagine 200 and asparagine 280. Positions aspartate 207–tryptophan 298 are alpha-3. The 89-residue stretch at proline 209–arginine 297 folds into the Ig-like C1-type domain. Cysteine 227 and cysteine 283 are disulfide-bonded. Residues glutamate 299–valine 309 form a connecting peptide region. The helical transmembrane segment at isoleucine 310 to methionine 331 threads the bilayer. Residues lysine 332–alanine 362 lie on the Cytoplasmic side of the membrane. Positions lysine 340–alanine 362 are disordered. Phosphoserine is present on residues serine 353 and serine 356.

It belongs to the MHC class I family. Heterodimer of an alpha chain and a beta chain (beta-2-microglobulin).

Its subcellular location is the membrane. Its function is as follows. Involved in the presentation of foreign antigens to the immune system. The polypeptide is H-2 class I histocompatibility antigen, L-D alpha chain (H2-L) (Mus musculus (Mouse)).